Reading from the N-terminus, the 240-residue chain is ATP-dependent dethiobiotin synthetase BioD (240 aa).

15 to 20 contacts ATP; the sequence is EIGKTF. Thr-19 is a binding site for Mg(2+). Lys-40 is an active-site residue. ATP contacts are provided by residues Asp-57, 118 to 121, and 178 to 179; these read EGVG and NR. Asp-57 and Glu-118 together coordinate Mg(2+).

Belongs to the dethiobiotin synthetase family. Homodimer. It depends on Mg(2+) as a cofactor.

The protein resides in the cytoplasm. It carries out the reaction (7R,8S)-7,8-diammoniononanoate + CO2 + ATP = (4R,5S)-dethiobiotin + ADP + phosphate + 3 H(+). It participates in cofactor biosynthesis; biotin biosynthesis; biotin from 7,8-diaminononanoate: step 1/2. Functionally, catalyzes a mechanistically unusual reaction, the ATP-dependent insertion of CO2 between the N7 and N8 nitrogen atoms of 7,8-diaminopelargonic acid (DAPA, also called 7,8-diammoniononanoate) to form a ureido ring. The protein is ATP-dependent dethiobiotin synthetase BioD of Burkholderia mallei (strain NCTC 10247).